A 265-amino-acid polypeptide reads, in one-letter code: Putative hydro-lyase PST_2764 (265 aa).

It belongs to the D-glutamate cyclase family.

The polypeptide is Putative hydro-lyase PST_2764 (Stutzerimonas stutzeri (strain A1501) (Pseudomonas stutzeri)).